We begin with the raw amino-acid sequence, 257 residues long: Glutamate racemase (257 aa).

Substrate-binding positions include 12–13 and 44–45; these read DS and YG. The Proton donor/acceptor role is filled by cysteine 75. 76 to 77 contacts substrate; the sequence is NT. Cysteine 185 acts as the Proton donor/acceptor in catalysis. Substrate is bound at residue 186 to 187; sequence TH.

The protein belongs to the aspartate/glutamate racemases family.

It catalyses the reaction L-glutamate = D-glutamate. It functions in the pathway cell wall biogenesis; peptidoglycan biosynthesis. Functionally, provides the (R)-glutamate required for cell wall biosynthesis. The polypeptide is Glutamate racemase (Clostridium botulinum (strain Okra / Type B1)).